A 213-amino-acid polypeptide reads, in one-letter code: Thiamine-phosphate synthase (213 aa).

4-amino-2-methyl-5-(diphosphooxymethyl)pyrimidine-binding positions include 38 to 42 (QLREK) and asparagine 73. 2 residues coordinate Mg(2+): aspartate 74 and aspartate 93. Serine 111 lines the 4-amino-2-methyl-5-(diphosphooxymethyl)pyrimidine pocket. 137-139 (TTS) contributes to the 2-[(2R,5Z)-2-carboxy-4-methylthiazol-5(2H)-ylidene]ethyl phosphate binding site. Lysine 140 is a binding site for 4-amino-2-methyl-5-(diphosphooxymethyl)pyrimidine. 2-[(2R,5Z)-2-carboxy-4-methylthiazol-5(2H)-ylidene]ethyl phosphate contacts are provided by residues glycine 169 and 189–190 (IS).

Belongs to the thiamine-phosphate synthase family. Requires Mg(2+) as cofactor.

The enzyme catalyses 2-[(2R,5Z)-2-carboxy-4-methylthiazol-5(2H)-ylidene]ethyl phosphate + 4-amino-2-methyl-5-(diphosphooxymethyl)pyrimidine + 2 H(+) = thiamine phosphate + CO2 + diphosphate. The catalysed reaction is 2-(2-carboxy-4-methylthiazol-5-yl)ethyl phosphate + 4-amino-2-methyl-5-(diphosphooxymethyl)pyrimidine + 2 H(+) = thiamine phosphate + CO2 + diphosphate. It carries out the reaction 4-methyl-5-(2-phosphooxyethyl)-thiazole + 4-amino-2-methyl-5-(diphosphooxymethyl)pyrimidine + H(+) = thiamine phosphate + diphosphate. The protein operates within cofactor biosynthesis; thiamine diphosphate biosynthesis; thiamine phosphate from 4-amino-2-methyl-5-diphosphomethylpyrimidine and 4-methyl-5-(2-phosphoethyl)-thiazole: step 1/1. Condenses 4-methyl-5-(beta-hydroxyethyl)thiazole monophosphate (THZ-P) and 2-methyl-4-amino-5-hydroxymethyl pyrimidine pyrophosphate (HMP-PP) to form thiamine monophosphate (TMP). This is Thiamine-phosphate synthase from Lysinibacillus sphaericus (strain C3-41).